The primary structure comprises 370 residues: MAVKVLVVDDSGFFRRRVSEILSADPTIQVVGTATNGKEAIDQALALKPDVITMDYEMPMMDGITAVRHIMQRCPTPVLMFSSLTHEGARVTLDALDAGAVDYLPKNFEDISRNPDKVKQLLCEKVHTISRSNRRIGSYARTAPVAAPAPASTFTSQAQTRPAAPARAAAPTPAASQSPAPKRKPYKLVAIGTSTGGPVALQRVLTQLPANFPAPIVLIQHMPAAFTKAFAERLDKLCRISVKEAEDGDMLRPGLALLAPGGKQMMIDGRGTVKILPGDERLNYKPCVDITFGSAAKSYGDKVLSVVLTGMGADGREGARLLKQGGSTVWAQDEASCVIYGMPMAIVKANLADAVYSLDEIGKHLVEACV.

The Response regulatory domain maps to 4–121 (KVLVVDDSGF…SRNPDKVKQL (118 aa)). Residue D55 is modified to 4-aspartylphosphate. The span at 150–180 (PASTFTSQAQTRPAAPARAAAPTPAASQSPA) shows a compositional bias: low complexity. The disordered stretch occupies residues 150–183 (PASTFTSQAQTRPAAPARAAAPTPAASQSPAPKR). The 192-residue stretch at 179-370 (PAPKRKPYKL…IGKHLVEACV (192 aa)) folds into the CheB-type methylesterase domain. Catalysis depends on residues S194, H221, and D314.

It belongs to the CheB family. Post-translationally, phosphorylated by CheA. Phosphorylation of the N-terminal regulatory domain activates the methylesterase activity.

Its subcellular location is the cytoplasm. It carries out the reaction [protein]-L-glutamate 5-O-methyl ester + H2O = L-glutamyl-[protein] + methanol + H(+). The catalysed reaction is L-glutaminyl-[protein] + H2O = L-glutamyl-[protein] + NH4(+). Involved in chemotaxis. Part of a chemotaxis signal transduction system that modulates chemotaxis in response to various stimuli. Catalyzes the demethylation of specific methylglutamate residues introduced into the chemoreceptors (methyl-accepting chemotaxis proteins or MCP) by CheR. Also mediates the irreversible deamidation of specific glutamine residues to glutamic acid. This Pseudomonas putida (strain ATCC 47054 / DSM 6125 / CFBP 8728 / NCIMB 11950 / KT2440) protein is Protein-glutamate methylesterase/protein-glutamine glutaminase of group 1 operon.